We begin with the raw amino-acid sequence, 268 residues long: MDLPVNRFKQRLRSGEAQIGLWLGLADPYCAELAANAGFDWLLLDGEHAPNDLRSLLGQLQALAPYPGQPVIRPVQGDTALIKQLLDIGAQTLLVPMVDSAAQAEGLVRAVRYPPAGVRGVGSALARASRWNSVAEYLNHADEQMCLLVQVENLEGLANLDAIAAVEGVDGVFIGPADLSAAMGHRGNPGHPEVQAAIEDAIHRIRTAGKAAGILSADETLARRYLELGCAFVAVGVDTSLLMRSLRELAGRFKGGAPAPSASSSVYG.

Histidine 48 (proton acceptor) is an active-site residue. 2 residues coordinate a divalent metal cation: glutamate 152 and aspartate 178.

Belongs to the HpcH/HpaI aldolase family. Mn(2+) is required as a cofactor. Mg(2+) serves as cofactor. It depends on Co(2+) as a cofactor.

The enzyme catalyses D-glyceraldehyde + 3-hydroxypyruvate = (3R,4S,5R)-3,4,5,6-tetrahydroxy-2-oxohexanoate. The catalysed reaction is D-glyceraldehyde + 3-hydroxypyruvate = 2-dehydro-D-gluconate. It catalyses the reaction D-glyceraldehyde + 3-hydroxypyruvate = 2-dehydro-D-galactonate. It carries out the reaction D-glyceraldehyde + pyruvate = 2-dehydro-3-deoxy-L-galactonate. The enzyme catalyses 2-dehydro-3-deoxy-D-gluconate = D-glyceraldehyde + pyruvate. Aldolase which can catalyze in vitro the aldolisation reaction between hydroxypyruvate (HPA) or pyruvate (PA) and D-glyceraldehyde (D-GA). The condensation of hydroxypyruvate and D-glyceraldehyde produces (3R,4S,5R)-3,4,5,6-tetrahydroxy-2-oxohexanoate as the major product, 2-dehydro-D-gluconate and 2-dehydro-D-galactonate. The condensation of pyruvate and D-glyceraldehyde produces 2-dehydro-3-deoxy-L-galactonate as the major product and 2-dehydro-3-deoxy-D-gluconate. Also catalyzes the retro-aldol type decarboxylation of oxaloacetate, a general property of known pyruvate aldolases. The protein is Hydroxypyruvate/pyruvate aldolase of Pseudomonas aeruginosa.